The chain runs to 138 residues: Large ribosomal subunit protein bL19 (138 aa).

The protein belongs to the bacterial ribosomal protein bL19 family.

Functionally, this protein is located at the 30S-50S ribosomal subunit interface and may play a role in the structure and function of the aminoacyl-tRNA binding site. In Rickettsia felis (strain ATCC VR-1525 / URRWXCal2) (Rickettsia azadi), this protein is Large ribosomal subunit protein bL19.